Reading from the N-terminus, the 120-residue chain is Putative 15 kDa capsid protein (120 aa).

It localises to the virion. The chain is Putative 15 kDa capsid protein (P15) from Orgyia pseudotsugata (Douglas-fir tussock moth).